An 84-amino-acid chain; its full sequence is Dolichol phosphate-mannose biosynthesis regulatory protein (84 aa).

2 helical membrane passes run 11 to 31 (LGLVALSLIIFTYYTAWVILL) and 49 to 69 (YAIAIPLAAGHLLLLFVGIFI).

This sequence belongs to the DPM2 family. As to quaternary structure, component of the dolichol-phosphate mannose (DPM) synthase complex composed of DPM1, DPM2 and DPM3; in the complex interacts directly with DPM3. Component of the glycosylphosphatidylinositol-N-acetylglucosaminyltransferase (GPI-GnT) complex composed at least by PIGA, PIGC, PIGH, PIGP, PIGQ, PIGY and DPM2. Interacts with PIGA, PIGC and PIGQ.

Its subcellular location is the endoplasmic reticulum membrane. Its pathway is protein modification; protein glycosylation. Functionally, regulates the biosynthesis of dolichol phosphate-mannose. Regulatory subunit of the dolichol-phosphate mannose (DPM) synthase complex; essential for the ER localization and stable expression of DPM1. Part of the glycosylphosphatidylinositol-N-acetylglucosaminyltransferase (GPI-GnT) complex that catalyzes the transfer of N-acetylglucosamine from UDP-N-acetylglucosamine to phosphatidylinositol and participates in the first step of GPI biosynthesis. May act by regulating the GPI-GNT complex. This Bos taurus (Bovine) protein is Dolichol phosphate-mannose biosynthesis regulatory protein.